Consider the following 185-residue polypeptide: Ribosome-recycling factor (185 aa).

The protein belongs to the RRF family.

The protein resides in the cytoplasm. Its function is as follows. Responsible for the release of ribosomes from messenger RNA at the termination of protein biosynthesis. May increase the efficiency of translation by recycling ribosomes from one round of translation to another. This chain is Ribosome-recycling factor, found in Aliivibrio fischeri (strain MJ11) (Vibrio fischeri).